Reading from the N-terminus, the 154-residue chain is Large ribosomal subunit protein uL15 (154 aa).

A disordered region spans residues 1–44 (MKLNELGNCKGATRNRKRVGRGIGSGTGKTSGRGVKGQKSRSGV). The segment covering 21–35 (RGIGSGTGKTSGRGV) has biased composition (gly residues).

Belongs to the universal ribosomal protein uL15 family. As to quaternary structure, part of the 50S ribosomal subunit.

Its function is as follows. Binds to the 23S rRNA. The polypeptide is Large ribosomal subunit protein uL15 (Bartonella quintana (strain Toulouse) (Rochalimaea quintana)).